A 107-amino-acid polypeptide reads, in one-letter code: Protein p13 MTCP-1 (107 aa).

This sequence belongs to the TCL1 family. Interacts with AKT1 and AKT2 (via PH domain). Does not interact with AKT3. Not found at a significant level in any tissue.

Its function is as follows. Enhances the phosphorylation and activation of AKT1 and AKT2. This chain is Protein p13 MTCP-1 (Mtcp1), found in Mus musculus (Mouse).